The chain runs to 321 residues: MIDFRPFYQHIATTHLSAWLETLPLQLKQWEKQTHGDYAKWAKIVDFLPHLDADHIDLKSAVKSESVSPLSAGEQQRLVYHLKQLMPWRKGPYHLHGIHIDCEWRSDFKWDRVLPHLAPLKDRTILDVGCGSGYHMWRMVGEGAKIVVGIDPTELFLCQFEAVRKLLNNDRRANLIPLGIEQMQPLAAFDTVFSMGVLYHRKSPLDHLSQLKNQLVRGGELVLETLVVDGDINTVLVPADRYAKMKNVYFIPSVPALINWLEKVGFKNVRCVDVAPTSLAEQRKTDWLENESLIDFLDPCDHTKTIEGYQAPTRAVILANK.

Carboxy-S-adenosyl-L-methionine-binding positions include Lys90, Trp104, Lys109, Gly129, 151–153, 180–181, Met195, Tyr199, and Arg314; these read DPT and IE.

It belongs to the class I-like SAM-binding methyltransferase superfamily. CmoB family. As to quaternary structure, homotetramer.

It carries out the reaction carboxy-S-adenosyl-L-methionine + 5-hydroxyuridine(34) in tRNA = 5-carboxymethoxyuridine(34) in tRNA + S-adenosyl-L-homocysteine + H(+). Catalyzes carboxymethyl transfer from carboxy-S-adenosyl-L-methionine (Cx-SAM) to 5-hydroxyuridine (ho5U) to form 5-carboxymethoxyuridine (cmo5U) at position 34 in tRNAs. This chain is tRNA U34 carboxymethyltransferase, found in Pasteurella multocida (strain Pm70).